The sequence spans 343 residues: Dihydroorotase (343 aa).

Residues His13 and His15 each coordinate Zn(2+). Substrate contacts are provided by residues 15 to 17 (HFR) and Asn41. Zn(2+) is bound by residues Lys98, His135, and His173. An N6-carboxylysine modification is found at Lys98. His135 contacts substrate. Leu218 contacts substrate. Asp246 is a Zn(2+) binding site. Asp246 is an active-site residue. His250 and Ala262 together coordinate substrate.

Belongs to the metallo-dependent hydrolases superfamily. DHOase family. Class II DHOase subfamily. In terms of assembly, homodimer. Zn(2+) serves as cofactor.

It catalyses the reaction (S)-dihydroorotate + H2O = N-carbamoyl-L-aspartate + H(+). It functions in the pathway pyrimidine metabolism; UMP biosynthesis via de novo pathway; (S)-dihydroorotate from bicarbonate: step 3/3. Its function is as follows. Catalyzes the reversible cyclization of carbamoyl aspartate to dihydroorotate. This is Dihydroorotase from Marinomonas sp. (strain MWYL1).